The chain runs to 636 residues: DNA mismatch repair protein MutL (636 aa).

Over residues 332–344 (HAGEQGDSLRTDI) the composition is skewed to basic and acidic residues. 2 disordered regions span residues 332 to 360 (HAGE…PADN) and 417 to 443 (ASAP…SDDA). A compositionally biased stretch (low complexity) spans 417–437 (ASAPADAAPAQASEPAAAPQA).

It belongs to the DNA mismatch repair MutL/HexB family.

Its function is as follows. This protein is involved in the repair of mismatches in DNA. It is required for dam-dependent methyl-directed DNA mismatch repair. May act as a 'molecular matchmaker', a protein that promotes the formation of a stable complex between two or more DNA-binding proteins in an ATP-dependent manner without itself being part of a final effector complex. This chain is DNA mismatch repair protein MutL, found in Ralstonia nicotianae (strain ATCC BAA-1114 / GMI1000) (Ralstonia solanacearum).